Consider the following 381-residue polypeptide: tRNA pseudouridine synthase D (381 aa).

The active-site Nucleophile is the Asp-81. Residues 160-335 enclose the TRUD domain; it reads GMPNYFGPQR…TLGSRRFFWV (176 aa).

It belongs to the pseudouridine synthase TruD family.

It catalyses the reaction uridine(13) in tRNA = pseudouridine(13) in tRNA. Functionally, responsible for synthesis of pseudouridine from uracil-13 in transfer RNAs. In Helicobacter pylori (strain Shi470), this protein is tRNA pseudouridine synthase D.